The sequence spans 96 residues: Defensin-like protein 151 (96 aa).

An N-terminal signal peptide occupies residues 1–29 (MKKPSQLSATILTIFVILAIGVMVKETLG). Cystine bridges form between Cys-35–Cys-88, Cys-48–Cys-68, Cys-53–Cys-82, and Cys-57–Cys-84.

This sequence belongs to the DEFL family.

The protein localises to the secreted. The protein is Defensin-like protein 151 (LCR17) of Arabidopsis thaliana (Mouse-ear cress).